Here is a 218-residue protein sequence, read N- to C-terminus: Small ribosomal subunit protein uS3 (218 aa).

The KH type-2 domain maps to 40–109; it reads IRKIINTEYS…DVSINIREVK (70 aa).

It belongs to the universal ribosomal protein uS3 family. Part of the 30S ribosomal subunit. Forms a tight complex with proteins S10 and S14.

Functionally, binds the lower part of the 30S subunit head. Binds mRNA in the 70S ribosome, positioning it for translation. This Orientia tsutsugamushi (strain Boryong) (Rickettsia tsutsugamushi) protein is Small ribosomal subunit protein uS3.